Reading from the N-terminus, the 404-residue chain is Tryptophan synthase beta chain (404 aa).

Lys90 carries the post-translational modification N6-(pyridoxal phosphate)lysine.

It belongs to the TrpB family. As to quaternary structure, tetramer of two alpha and two beta chains. Pyridoxal 5'-phosphate is required as a cofactor.

It catalyses the reaction (1S,2R)-1-C-(indol-3-yl)glycerol 3-phosphate + L-serine = D-glyceraldehyde 3-phosphate + L-tryptophan + H2O. It functions in the pathway amino-acid biosynthesis; L-tryptophan biosynthesis; L-tryptophan from chorismate: step 5/5. Its function is as follows. The beta subunit is responsible for the synthesis of L-tryptophan from indole and L-serine. The protein is Tryptophan synthase beta chain of Geobacillus thermodenitrificans (strain NG80-2).